The sequence spans 500 residues: Replication factor C large subunit (500 aa).

44–51 (GSPGVGKT) contacts ATP. The segment at 443–500 (HAADDLGASDGETTNASGTASSSGDDGDADGTTDGDGSDANDGNDDDDDGQAGLSDFV) is disordered. The segment covering 455–466 (TTNASGTASSSG) has biased composition (low complexity). Residues 467 to 492 (DDGDADGTTDGDGSDANDGNDDDDDG) are compositionally biased toward acidic residues.

The protein belongs to the activator 1 small subunits family. RfcL subfamily. In terms of assembly, heteromultimer composed of small subunits (RfcS) and large subunits (RfcL).

In terms of biological role, part of the RFC clamp loader complex which loads the PCNA sliding clamp onto DNA. The protein is Replication factor C large subunit of Halorubrum lacusprofundi (strain ATCC 49239 / DSM 5036 / JCM 8891 / ACAM 34).